Here is a 476-residue protein sequence, read N- to C-terminus: PRAME family member 6 (476 aa).

One copy of the LRR 1; degenerate repeat lies at 97 to 124 (RWKLQVLDLQDVCENFWMVWSEAMARGC). One copy of the LRR 2; degenerate repeat lies at 179 to 203 (HLCCKKLKILGMPFRNIRSILKMVN). One copy of the LRR 3; degenerate repeat lies at 204–230 (LDCIQEVEVNCKWVLPILTQFTPYLGH). Residues 231–266 (MRNLQKLVLSHMDVSRYVSPEQKKEIVTQFTTQFLK) form an LRR 4; degenerate repeat. LRR repeat units follow at residues 267 to 292 (LCCL…LSCL), 293 to 324 (KTSL…SQLK), 325 to 345 (TLDL…QILL), 349 to 376 (AATL…ALSR), and 377 to 401 (CFEL…LLSH).

It belongs to the PRAME family. In terms of assembly, component of a CRL2 E3 ubiquitin-protein ligase complex, also named ECS (Elongin BC-CUL2/5-SOCS-box protein) complex, composed of CUL2, Elongin BC (ELOB and ELOC), RBX1 and substrate-specific adapter PRAMEF6.

It functions in the pathway protein modification; protein ubiquitination. Functionally, substrate-recognition component of a Cul2-RING (CRL2) E3 ubiquitin-protein ligase complex, which mediates ubiquitination of target proteins, leading to their degradation. The CRL2(PRAMEF6) complex mediates ubiquitination and degradation of truncated MSRB1/SEPX1 selenoproteins produced by failed UGA/Sec decoding. This Homo sapiens (Human) protein is PRAME family member 6.